A 331-amino-acid polypeptide reads, in one-letter code: Meiotically up-regulated gene 172 protein (331 aa).

Residues 72-166 adopt a coiled-coil conformation; sequence IKNNEYEKQR…KGNYGLVKAR (95 aa).

It belongs to the ADIP family.

The protein resides in the cytoplasm. Its function is as follows. Has a role in meiosis. In Schizosaccharomyces pombe (strain 972 / ATCC 24843) (Fission yeast), this protein is Meiotically up-regulated gene 172 protein (mug172).